The primary structure comprises 407 residues: GTPase Obg (407 aa).

One can recognise an Obg domain in the interval Met1–Leu159. The segment at Asn127–Arg150 is disordered. Residues Arg129–Pro143 are compositionally biased toward polar residues. In terms of domain architecture, OBG-type G spans Ala160–Glu333. Residues Gly166–Ser173, Phe191–Val195, Asp213–Gly216, Asn283–Asp286, and Ser314–Ile316 contribute to the GTP site. Mg(2+) contacts are provided by Ser173 and Thr193. Residues Val378–Asp407 are disordered. The span at Gly385–Pro400 shows a compositional bias: acidic residues.

This sequence belongs to the TRAFAC class OBG-HflX-like GTPase superfamily. OBG GTPase family. Monomer. Requires Mg(2+) as cofactor.

The protein resides in the cytoplasm. In terms of biological role, an essential GTPase which binds GTP, GDP and possibly (p)ppGpp with moderate affinity, with high nucleotide exchange rates and a fairly low GTP hydrolysis rate. Plays a role in control of the cell cycle, stress response, ribosome biogenesis and in those bacteria that undergo differentiation, in morphogenesis control. The protein is GTPase Obg of Pseudomonas entomophila (strain L48).